A 140-amino-acid chain; its full sequence is Midkine (140 aa).

An N-terminal signal peptide occupies residues 1-20 (MQHRSFFLLALVALLAVTTA). Intrachain disulfides connect cysteine 34–cysteine 58, cysteine 42–cysteine 67, cysteine 49–cysteine 71, cysteine 81–cysteine 113, and cysteine 91–cysteine 123.

This sequence belongs to the pleiotrophin family. As to quaternary structure, homodimer. Interacts with ALK. Interacts with LRP1; promotes neuronal survival. Interacts with LRP2. Interacts with NCAM1. Interacts (via C-terminal) with PTPRZ1 (via chondroitin sulfate chains); this interaction is inhibited by PTN; this interaction promotes neuronal migration. Interacts with NCL; this interaction promotes NCL clustering and lateral movements of this complex into lipid rafts leading to MDK internalization. Interacts with LRP6 and LRP8: this interaction is calcium dependent. Interacts with ITGA4. Interacts with ITGA6. Interacts with ITGB1. Interacts with ITGA4:ITGB1 complex; this interaction mediates MDK-induced osteoblast cells migration through PXN phosphorylation. Interacts with ITGA6:ITGB1 complex; this interaction mediates MDK-induced neurite outgrowth. Interacts with NOTCH2; this interactio mediates a nuclear accumulation of NOTCH2 and therefore activation of NOTCH2 signaling leading to interaction between HES1 and STAT3. Interacts with GPC2 (via heparan sulfate chain); this interaction is inhibited by heparin followed by chondroitin sulfate E; this interaction induces GPC2 clustering through heparan sulfate chain; this interaction induces neuronal cell adhesion and neurite outgrowth. Interacts with SDC3; this interaction induces SDC3 clustering; this interaction induces neuronal cell adhesion and neurite outgrowth. Interacts with SDC1. Interacts with CSPG5; this interaction promotes elongation of oligodendroglial precursor-like cells. As to expression, expressed at a low level in arteries, and at higher levels in newly formed neointima. In brain, expressed in the caudate nucleus and the brain stem.

Its subcellular location is the secreted. Its function is as follows. Developmentally regulated, secreted growth factor homologous to pleiotrophin (PTN), which has heparin binding activity. Binds anaplastic lymphoma kinase (ALK) which induces ALK activation and subsequent phosphorylation of the insulin receptor substrate (IRS1), followed by the activation of mitogen-activated protein kinase (MAPK) and PI3-kinase, and the induction of cell proliferation. Involved in neointima formation after arterial injury, possibly by mediating leukocyte recruitment. Also involved in early fetal adrenal gland development. Functionally, secreted protein that functions as a cytokine and growth factor and mediates its signal through cell-surface proteoglycan and non-proteoglycan receptors. Binds cell-surface proteoglycan receptors via their chondroitin sulfate (CS) groups. Thereby regulates many processes like inflammatory response, cell proliferation, cell adhesion, cell growth, cell survival, tissue regeneration, cell differentiation and cell migration. Participates in inflammatory processes by exerting two different activities. Firstly, mediates neutrophils and macrophages recruitment to the sites of inflammation both by direct action by cooperating namely with ITGB2 via LRP1 and by inducing chemokine expression. This inflammation can be accompanied by epithelial cell survival and smooth muscle cell migration after renal and vessel damage, respectively. Secondly, suppresses the development of tolerogenic dendric cells thereby inhibiting the differentiation of regulatory T cells and also promote T cell expansion through NFAT signaling and Th1 cell differentiation. Promotes tissue regeneration after injury or trauma. After heart damage negatively regulates the recruitment of inflammatory cells and mediates cell survival through activation of anti-apoptotic signaling pathways via MAPKs and AKT pathways through the activation of angiogenesis. Also facilitates liver regeneration as well as bone repair by recruiting macrophage at trauma site and by promoting cartilage development by facilitating chondrocyte differentiation. Plays a role in brain by promoting neural precursor cells survival and growth through interaction with heparan sulfate proteoglycans. Binds PTPRZ1 and promotes neuronal migration and embryonic neurons survival. Binds SDC3 or GPC2 and mediates neurite outgrowth and cell adhesion. Binds chondroitin sulfate E and heparin leading to inhibition of neuronal cell adhesion induced by binding with GPC2. Binds CSPG5 and promotes elongation of oligodendroglial precursor-like cells. Also binds ITGA6:ITGB1 complex; this interaction mediates MDK-induced neurite outgrowth. Binds LRP1; promotes neuronal survival. Binds ITGA4:ITGB1 complex; this interaction mediates MDK-induced osteoblast cells migration through PXN phosphorylation. Binds anaplastic lymphoma kinase (ALK) which induces ALK activation and subsequent phosphorylation of the insulin receptor substrate (IRS1), followed by the activation of mitogen-activated protein kinase (MAPK) and PI3-kinase, and the induction of cell proliferation. Promotes epithelial to mesenchymal transition through interaction with NOTCH2. During arteriogenesis, plays a role in vascular endothelial cell proliferation by inducing VEGFA expression and release which in turn induces nitric oxide synthase expression. Moreover activates vasodilation through nitric oxide synthase activation. Negatively regulates bone formation in response to mechanical load by inhibiting Wnt/beta-catenin signaling in osteoblasts. In addition plays a role in hippocampal development, working memory, auditory response, early fetal adrenal gland development and the female reproductive system. The chain is Midkine from Rattus norvegicus (Rat).